The following is a 441-amino-acid chain: Probable carboxypeptidase NFIA_052450 (441 aa).

The first 16 residues, 1 to 16, serve as a signal peptide directing secretion; that stretch reads MKPLSSLLLSAALSAA. Residues Asn-88 and Asn-150 are each glycosylated (N-linked (GlcNAc...) asparagine). A Zn(2+)-binding site is contributed by Asp-166. Residue Glu-198 is the Proton acceptor of the active site. Position 199 (Glu-199) interacts with Zn(2+). 2 N-linked (GlcNAc...) asparagine glycosylation sites follow: Asn-354 and Asn-373.

Belongs to the peptidase M20A family. Requires Zn(2+) as cofactor.

It localises to the secreted. The chain is Probable carboxypeptidase NFIA_052450 from Neosartorya fischeri (strain ATCC 1020 / DSM 3700 / CBS 544.65 / FGSC A1164 / JCM 1740 / NRRL 181 / WB 181) (Aspergillus fischerianus).